Consider the following 407-residue polypeptide: GTPase Obg (407 aa).

In terms of domain architecture, Obg spans 1-159; it reads MKFVDEVSIR…RDLKLEMKVL (159 aa). The tract at residues 128–148 is disordered; the sequence is TRFKSSTNRAPRQTTPGKPGE. The segment covering 129-143 has biased composition (polar residues); sequence RFKSSTNRAPRQTTP. Residues 160–333 form the OBG-type G domain; it reads ADVGLLGLPN…LTRDIMRYLE (174 aa). Residues 166–173, 191–195, 213–216, 283–286, and 314–316 contribute to the GTP site; these read GLPNAGKS, FTTLV, DIPG, NKCD, and SAI. Ser173 and Thr193 together coordinate Mg(2+). Residues 376–407 are disordered; it reads SGVKSVHDIGDDDWDEEDVDDEDGPEIIYVRD. A compositionally biased stretch (acidic residues) spans 385–400; it reads GDDDWDEEDVDDEDGP.

Belongs to the TRAFAC class OBG-HflX-like GTPase superfamily. OBG GTPase family. Monomer. Mg(2+) is required as a cofactor.

The protein resides in the cytoplasm. An essential GTPase which binds GTP, GDP and possibly (p)ppGpp with moderate affinity, with high nucleotide exchange rates and a fairly low GTP hydrolysis rate. Plays a role in control of the cell cycle, stress response, ribosome biogenesis and in those bacteria that undergo differentiation, in morphogenesis control. In Pseudomonas fluorescens (strain Pf0-1), this protein is GTPase Obg.